The sequence spans 465 residues: Cysteine--tRNA ligase (465 aa).

A Zn(2+)-binding site is contributed by Cys-27. Positions 29-39 (PTVYDDAHLGH) match the 'HIGH' region motif. The tract at residues 153 to 173 (DISHKVSDDDTQSRVEHNSEK) is disordered. Positions 208, 237, and 241 each coordinate Zn(2+). The 'KMSKS' region motif lies at 269 to 273 (KMSKS). Residue Lys-272 coordinates ATP.

This sequence belongs to the class-I aminoacyl-tRNA synthetase family. As to quaternary structure, monomer. Zn(2+) serves as cofactor.

The protein resides in the cytoplasm. The catalysed reaction is tRNA(Cys) + L-cysteine + ATP = L-cysteinyl-tRNA(Cys) + AMP + diphosphate. This is Cysteine--tRNA ligase from Sulfurovum sp. (strain NBC37-1).